The primary structure comprises 179 residues: MAKLHDYYKSSVVAELTKEFSYSSVMQVPRVEKITLNMGVGEAINDKKLLENAAADMAIISGQKPLITKARKSVAGFKIREGYPIGCKVTLRGERMWEFLERLVSIALPRVRDFRGVSAKSFDGRGNYSMGVREQIIFPEIDYDKVDRVRGLDITITTSANTDAEGRALLAAFNFPFRK.

This sequence belongs to the universal ribosomal protein uL5 family. In terms of assembly, part of the 50S ribosomal subunit; part of the 5S rRNA/L5/L18/L25 subcomplex. Contacts the 5S rRNA and the P site tRNA. Forms a bridge to the 30S subunit in the 70S ribosome.

In terms of biological role, this is one of the proteins that bind and probably mediate the attachment of the 5S RNA into the large ribosomal subunit, where it forms part of the central protuberance. In the 70S ribosome it contacts protein S13 of the 30S subunit (bridge B1b), connecting the 2 subunits; this bridge is implicated in subunit movement. Contacts the P site tRNA; the 5S rRNA and some of its associated proteins might help stabilize positioning of ribosome-bound tRNAs. This chain is Large ribosomal subunit protein uL5, found in Aliivibrio salmonicida (strain LFI1238) (Vibrio salmonicida (strain LFI1238)).